We begin with the raw amino-acid sequence, 193 residues long: Resuscitation-promoting factor Rpf1 (193 aa).

A signal peptide spans 1-35 (MGRHSTKTSSAFTKLAASTIAFGAAATIMAPSASA).

The protein belongs to the transglycosylase family. Rpf subfamily.

The protein localises to the secreted. Its function is as follows. Factor that stimulates resuscitation of dormant cells. Has peptidoglycan (PG) hydrolytic activity. Active in the pM concentration range. Has little to no effect on actively-growing cells. PG fragments could either directly activate the resuscitation pathway of dormant bacteria or serve as a substrate for endogenous Rpf, resulting in low molecular weight products with resuscitation activity. In Corynebacterium glutamicum (strain ATCC 13032 / DSM 20300 / JCM 1318 / BCRC 11384 / CCUG 27702 / LMG 3730 / NBRC 12168 / NCIMB 10025 / NRRL B-2784 / 534), this protein is Resuscitation-promoting factor Rpf1 (rpf1).